A 159-amino-acid polypeptide reads, in one-letter code: Vesicle transport protein SFT2A (159 aa).

The Cytoplasmic portion of the chain corresponds to 1–36 (MEKLRRVLSGQDDEEQGLTAQVLDASSLSFNTRLKW). Ser-9 is modified (phosphoserine). The helical transmembrane segment at 37–57 (FAICFVCGVFFSILGTGLLWL) threads the bilayer. The Lumenal segment spans residues 58–62 (PGGIK). Residues 63 to 83 (LFAVFYTLGNLAALASTCFLM) traverse the membrane as a helical segment. The Cytoplasmic portion of the chain corresponds to 84–97 (GPVKQLKKMFEATR). A helical membrane pass occupies residues 98-118 (LLATIVMLLCFIFTLCAALWW). Residues 119-122 (HKKG) lie on the Lumenal side of the membrane. A helical membrane pass occupies residues 123–143 (LAVLFCILQFLSMTWYSLSYI). At 144–159 (PYARDAVIKCCSSLLS) the chain is on the cytoplasmic side.

The protein belongs to the SFT2 family.

It localises to the membrane. May be involved in fusion of retrograde transport vesicles derived from an endocytic compartment with the Golgi complex. The sequence is that of Vesicle transport protein SFT2A from Homo sapiens (Human).